Here is a 284-residue protein sequence, read N- to C-terminus: MKKFTHYIVEQIVNKYNKMFQCKMNKIPKNQSITHFKTVFDLYEKIGIQEVFFNIKPTGIYIYTTYDNSIHVETIFSNNFFLEYMCEKDAIFTLKVNAMKVRNLVNTDSLEMGIRSAQDAPLVIRMSTKTIDFEKKIAIKKTQSYKLPELIDVTPLTIKSADFLEFCKSINGGKYTLSIKTKKSEMVNGVLQRGEIIFEAENSRIVIRSETPIESEFEGEFKSEYFSSLRKVTKFNTTLKIYLCPDHPLIFETTIGPKEKDKVIVWIKSLKQMEEEYHLQKSIT.

Belongs to the IIV-6 436R family.

This is an uncharacterized protein from Invertebrate iridescent virus 3 (IIV-3).